We begin with the raw amino-acid sequence, 126 residues long: Holo-[acyl-carrier-protein] synthase (126 aa).

Mg(2+) is bound by residues Asp9 and Glu58.

This sequence belongs to the P-Pant transferase superfamily. AcpS family. Mg(2+) is required as a cofactor.

Its subcellular location is the cytoplasm. The catalysed reaction is apo-[ACP] + CoA = holo-[ACP] + adenosine 3',5'-bisphosphate + H(+). In terms of biological role, transfers the 4'-phosphopantetheine moiety from coenzyme A to a Ser of acyl-carrier-protein. The protein is Holo-[acyl-carrier-protein] synthase of Shewanella frigidimarina (strain NCIMB 400).